A 207-amino-acid chain; its full sequence is Shikimate kinase (207 aa).

Residue 32 to 37 participates in ATP binding; it reads GVGKST. Mg(2+) is bound at residue serine 36. Aspartate 54, arginine 78, and glycine 100 together coordinate substrate. Arginine 138 lines the ATP pocket. Arginine 157 contacts substrate.

Belongs to the shikimate kinase family. In terms of assembly, monomer. It depends on Mg(2+) as a cofactor.

The protein localises to the cytoplasm. It catalyses the reaction shikimate + ATP = 3-phosphoshikimate + ADP + H(+). Its pathway is metabolic intermediate biosynthesis; chorismate biosynthesis; chorismate from D-erythrose 4-phosphate and phosphoenolpyruvate: step 5/7. Functionally, catalyzes the specific phosphorylation of the 3-hydroxyl group of shikimic acid using ATP as a cosubstrate. This chain is Shikimate kinase, found in Bradyrhizobium diazoefficiens (strain JCM 10833 / BCRC 13528 / IAM 13628 / NBRC 14792 / USDA 110).